Reading from the N-terminus, the 474-residue chain is Homeobox protein PKNOX2 (474 aa).

A disordered region spans residues 1-42 (MMQHASPAPALTMMATQNVPPPPYQDSPQMTATAQPPSKAQA). The segment covering 26–38 (DSPQMTATAQPPS) has biased composition (polar residues). Residues 96–179 (GSECITSASF…MHSDNLLRND (84 aa)) enclose the MEIS N-terminal domain. A DNA-binding region (homeobox) is located at residues 291–350 (KRGVLPKHATNIMRSWLFQHLMHPYPTEDEKRQIAAQTNLTLLQVNNWFINARRRILQPM). Disordered regions lie at residues 351 to 371 (LDAS…QHRP), 385 to 405 (LQQQ…LDNL), and 423 to 474 (AAHD…DSLE). Basic residues predominate over residues 361-371 (KAKKIKSQHRP). Residues 429-456 (LDGTEEEDEDDMEEEEEEEEELEEEADE) show a composition bias toward acidic residues.

The protein belongs to the TALE/MEIS homeobox family.

It localises to the nucleus. This is Homeobox protein PKNOX2 (Pknox2) from Mus musculus (Mouse).